A 646-amino-acid chain; its full sequence is Long-chain fatty acid transport protein 1 (646 aa).

Residues 1 to 13 lie on the Extracellular side of the membrane; that stretch reads MRTPGAGTASVAS. The chain crosses the membrane as a helical span at residues 14 to 34; sequence LGLLWLLGLPWTWSAAAAFGV. Residues 35–646 are Cytoplasmic-facing; sequence YVGSGGWRFL…ARICAGDFSL (612 aa). A sufficient for oligomerization region spans residues 191–475; that stretch reads EVSEQLGKSL…YVSDSATNKK (285 aa). 246-257 contacts AMP; sequence YIYTSGTTGLPK.

This sequence belongs to the ATP-dependent AMP-binding enzyme family. In terms of assembly, self-associates. May function as a homodimer. Interacts with EPRS1; mediates the translocation of SLC27A1 from the cytoplasm to the plasma membrane thereby increasing the uptake of long-chain fatty acids. Interacts with DGAT2 and this interaction is enhanced in the presence of ZFYVE1. As to expression, expressed in muscle.

The protein localises to the cell membrane. Its subcellular location is the endomembrane system. The protein resides in the cytoplasm. It catalyses the reaction a fatty acid(in) = a fatty acid(out). The catalysed reaction is (9Z)-octadecenoate(out) = (9Z)-octadecenoate(in). It carries out the reaction hexadecanoate(out) = hexadecanoate(in). The enzyme catalyses (5Z,8Z,11Z,14Z)-eicosatetraenoate(out) = (5Z,8Z,11Z,14Z)-eicosatetraenoate(in). It catalyses the reaction (9Z,12Z)-octadecadienoate(out) = (9Z,12Z)-octadecadienoate(in). The catalysed reaction is a long-chain fatty acid + ATP + CoA = a long-chain fatty acyl-CoA + AMP + diphosphate. It carries out the reaction (5Z,8Z,11Z,14Z)-eicosatetraenoate + ATP + CoA = (5Z,8Z,11Z,14Z)-eicosatetraenoyl-CoA + AMP + diphosphate. The enzyme catalyses a very long-chain fatty acid + ATP + CoA = a very long-chain fatty acyl-CoA + AMP + diphosphate. It catalyses the reaction tetracosanoate + ATP + CoA = tetracosanoyl-CoA + AMP + diphosphate. Its activity is regulated as follows. Inhibited by Triacsin C. Mediates the import of long-chain fatty acids (LCFA) into the cell by facilitating their transport at the plasma membrane. Also functions as an acyl-CoA ligase catalyzing the ATP-dependent formation of fatty acyl-CoA using LCFA and very-long-chain fatty acids (VLCFA) as substrates, which prevents fatty acid efflux from cells and might drive more fatty acid uptake. May act directly as a bona fide transporter, or alternatively, in a cytoplasmic or membrane-associated multimeric protein complex to trap and draw fatty acids towards accumulation. Plays a pivotal role in regulating available LCFA substrates from exogenous sources in tissues undergoing high levels of beta-oxidation or triglyceride synthesis. May be involved in regulation of cholesterol metabolism. Probably involved in fatty acid transport across the blood barrier. The protein is Long-chain fatty acid transport protein 1 of Rattus norvegicus (Rat).